The primary structure comprises 155 residues: Large ribosomal subunit protein uL30 (155 aa).

It belongs to the universal ribosomal protein uL30 family. Part of the 50S ribosomal subunit.

In Pyrococcus furiosus (strain ATCC 43587 / DSM 3638 / JCM 8422 / Vc1), this protein is Large ribosomal subunit protein uL30.